The following is a 134-amino-acid chain: Ribosome-binding factor A (134 aa).

The interval 115-134 (EDQRQERGEIPPGSDELQPD) is disordered.

Belongs to the RbfA family. In terms of assembly, monomer. Binds 30S ribosomal subunits, but not 50S ribosomal subunits or 70S ribosomes.

Its subcellular location is the cytoplasm. Functionally, one of several proteins that assist in the late maturation steps of the functional core of the 30S ribosomal subunit. Associates with free 30S ribosomal subunits (but not with 30S subunits that are part of 70S ribosomes or polysomes). Required for efficient processing of 16S rRNA. May interact with the 5'-terminal helix region of 16S rRNA. The sequence is that of Ribosome-binding factor A from Synechococcus sp. (strain CC9902).